The primary structure comprises 502 residues: MAEYTHYFIQYNLTDIFYEDVNIEKYSCSICYESVYKKEIYQCKEIHWFCKTCWAESLFKKKECMICRCIVKSISELSRNRFIEQDFLNIKVNCPNSFKYIDENKNNNNKIKDLENGCKDIITIGEIEKHLKQCKFTHIKCKFIGCNKIIRLNQVEKHEKEQCEFRLEYCRYCDTDGITSRSLENHYKECPKFIVKCSENGCTVQLERSQLESHIEKQCQMVMIDCPYKIYGCEQSNRFPKSNLTQHLSSINHTLAMGSMIESQSLQIKETNIKYENLLNKINKLEQLETESKCDQLYDKFYQFESKIDKKLNNLQLDLYPKDNQQPQQKEQKEQKEQKEQQERIKFDDLFEKVSKVNSYFINGCLLKYKNRWSISNYLTESRKYRKITSPSFKIYDKKFKLVIYPQGKDDGSYTSLFLKSDSINPIKVFYKFVLLNFKDESKNLIFKNKSIMDKEKSVGCHYFIKSTEPGKKPEVWLKDDSLVIDFSIEVNINNDIKPLES.

An RING-type; degenerate zinc finger spans residues cysteine 28–arginine 68. TRAF-type zinc fingers lie at residues lysine 129–leucine 183 and asparagine 185–asparagine 243. Positions isoleucine 261–aspartate 295 form a coiled coil. An MATH domain is found at lysine 368–isoleucine 489.

This sequence belongs to the TNF receptor-associated factor family. A subfamily.

The protein resides in the cytoplasm. Probable adapter protein and signal transducer that links members of the tumor necrosis factor receptor family to different signaling pathways by association with the receptor cytoplasmic domain and kinases. This Dictyostelium discoideum (Social amoeba) protein is TNF receptor-associated factor family protein DDB_G0268444.